The chain runs to 90 residues: Small ribosomal subunit protein uS15c (90 aa).

Belongs to the universal ribosomal protein uS15 family. As to quaternary structure, part of the 30S ribosomal subunit.

The protein localises to the plastid. The protein resides in the chloroplast. The sequence is that of Small ribosomal subunit protein uS15c (rps15) from Buxus microphylla (Littleleaf boxwood).